A 305-amino-acid polypeptide reads, in one-letter code: Calponin-2 (305 aa).

Ser2 is subject to N-acetylserine. N6-acetyllysine is present on residues Lys8 and Lys25. Positions 28–132 (PQKEAELRSW…SLLALAGKAK (105 aa)) constitute a Calponin-homology (CH) domain. Ser138 carries the phosphoserine modification. 3 Calponin-like repeats span residues 166 to 191 (IGLQMGTNKCASQSGMTAYGTRRHLY), 206 to 231 (ISLQMGTNKCASQVGMTAPGTRRHIY), and 245 to 269 (MSLQMGYTQGANQSGQVFGLGRQIY).

This sequence belongs to the calponin family. In terms of tissue distribution, smooth muscle, and tissues containing significant amounts of smooth muscle.

Functionally, thin filament-associated protein that is implicated in the regulation and modulation of smooth muscle contraction. It is capable of binding to actin, calmodulin and tropomyosin. The interaction of calponin with actin inhibits the actomyosin Mg-ATPase activity. The chain is Calponin-2 (Cnn2) from Mus musculus (Mouse).